Here is a 314-residue protein sequence, read N- to C-terminus: Glycerol-1-phosphate dehydrogenase [NAD(P)+] (314 aa).

NAD(+) is bound by residues 52–56 (GKPLD) and 74–77 (TSAS). A substrate-binding site is contributed by aspartate 79. Serine 83 contacts NAD(+). A substrate-binding site is contributed by aspartate 131. Positions 131 and 211 each coordinate Zn(2+). Residue histidine 215 coordinates substrate. Histidine 231 serves as a coordination point for Zn(2+).

The protein belongs to the glycerol-1-phosphate dehydrogenase family. The cofactor is Zn(2+).

It is found in the cytoplasm. It carries out the reaction sn-glycerol 1-phosphate + NAD(+) = dihydroxyacetone phosphate + NADH + H(+). It catalyses the reaction sn-glycerol 1-phosphate + NADP(+) = dihydroxyacetone phosphate + NADPH + H(+). The protein operates within membrane lipid metabolism; glycerophospholipid metabolism. Catalyzes the NAD(P)H-dependent reduction of dihydroxyacetonephosphate (DHAP or glycerone phosphate) to glycerol 1-phosphate (G1P). The G1P thus generated is used as the glycerophosphate backbone of phospholipids in the cellular membranes of Archaea. The chain is Glycerol-1-phosphate dehydrogenase [NAD(P)+] from Korarchaeum cryptofilum (strain OPF8).